A 453-amino-acid chain; its full sequence is Regulatory protein LuxO (453 aa).

Residues 1–112 (MVEDTASVAA…RLRVTVNNAI (112 aa)) form the Response regulatory domain. D47 bears the 4-aspartylphosphate mark. The Sigma-54 factor interaction domain maps to 133–362 (FIGSSQTMQQ…LQNVLRNIVV (230 aa)). ATP is bound by residues 161-168 (GESGTGKE) and 224-233 (ADGGTLFLDE).

Involved in the regulation of different processes depending on the cell density. Acts together with sigma-54 to repress, perhaps indirectly, some genes. The sequence is that of Regulatory protein LuxO (luxO) from Vibrio parahaemolyticus serotype O3:K6 (strain RIMD 2210633).